Here is a 161-residue protein sequence, read N- to C-terminus: 2-C-methyl-D-erythritol 2,4-cyclodiphosphate synthase (161 aa).

A divalent metal cation is bound by residues aspartate 9 and histidine 11. Residues 9 to 11 and 37 to 38 each bind 4-CDP-2-C-methyl-D-erythritol 2-phosphate; these read DFH and HS. Histidine 45 lines the a divalent metal cation pocket. Residues 59–61, 64–68, 135–138, and arginine 145 contribute to the 4-CDP-2-C-methyl-D-erythritol 2-phosphate site; these read DIG, FPDTD, and TTTE.

Belongs to the IspF family. In terms of assembly, homotrimer. The cofactor is a divalent metal cation.

The enzyme catalyses 4-CDP-2-C-methyl-D-erythritol 2-phosphate = 2-C-methyl-D-erythritol 2,4-cyclic diphosphate + CMP. Its pathway is isoprenoid biosynthesis; isopentenyl diphosphate biosynthesis via DXP pathway; isopentenyl diphosphate from 1-deoxy-D-xylulose 5-phosphate: step 4/6. Functionally, involved in the biosynthesis of isopentenyl diphosphate (IPP) and dimethylallyl diphosphate (DMAPP), two major building blocks of isoprenoid compounds. Catalyzes the conversion of 4-diphosphocytidyl-2-C-methyl-D-erythritol 2-phosphate (CDP-ME2P) to 2-C-methyl-D-erythritol 2,4-cyclodiphosphate (ME-CPP) with a corresponding release of cytidine 5-monophosphate (CMP). The polypeptide is 2-C-methyl-D-erythritol 2,4-cyclodiphosphate synthase (Leptospira interrogans serogroup Icterohaemorrhagiae serovar copenhageni (strain Fiocruz L1-130)).